Here is a 225-residue protein sequence, read N- to C-terminus: Biosynthetic peptidoglycan transglycosylase (225 aa).

The chain crosses the membrane as a helical span at residues 9–29 (LLIFIGAILLIQLWIFSSLVW).

The protein belongs to the glycosyltransferase 51 family.

It localises to the cell inner membrane. The enzyme catalyses [GlcNAc-(1-&gt;4)-Mur2Ac(oyl-L-Ala-gamma-D-Glu-L-Lys-D-Ala-D-Ala)](n)-di-trans,octa-cis-undecaprenyl diphosphate + beta-D-GlcNAc-(1-&gt;4)-Mur2Ac(oyl-L-Ala-gamma-D-Glu-L-Lys-D-Ala-D-Ala)-di-trans,octa-cis-undecaprenyl diphosphate = [GlcNAc-(1-&gt;4)-Mur2Ac(oyl-L-Ala-gamma-D-Glu-L-Lys-D-Ala-D-Ala)](n+1)-di-trans,octa-cis-undecaprenyl diphosphate + di-trans,octa-cis-undecaprenyl diphosphate + H(+). It functions in the pathway cell wall biogenesis; peptidoglycan biosynthesis. Peptidoglycan polymerase that catalyzes glycan chain elongation from lipid-linked precursors. In Acinetobacter baumannii (strain SDF), this protein is Biosynthetic peptidoglycan transglycosylase.